The sequence spans 237 residues: Ribosomal RNA small subunit methyltransferase G (237 aa).

S-adenosyl-L-methionine-binding positions include Gly78, Phe83, 129-130 (AE), and Arg148.

It belongs to the methyltransferase superfamily. RNA methyltransferase RsmG family.

The protein localises to the cytoplasm. Functionally, specifically methylates the N7 position of a guanine in 16S rRNA. This Streptococcus pyogenes serotype M6 (strain ATCC BAA-946 / MGAS10394) protein is Ribosomal RNA small subunit methyltransferase G.